A 932-amino-acid polypeptide reads, in one-letter code: Serotype-specific antigen 1 (932 aa).

The N-terminal stretch at 1–24 (MYKIKHSFNKTLIAISISSFLSIA) is a signal peptide. The 383-residue stretch at 25-407 (YATESIENPQ…WGLINLKKAV (383 aa)) folds into the Peptidase S8 domain. Catalysis depends on charge relay system residues Asp-58, His-116, and Ser-351. The Autotransporter domain occupies 669–932 (HTPLQTTVWA…PIWLESKCWL (264 aa)).

It belongs to the peptidase S8 family.

The protein resides in the cell outer membrane. The polypeptide is Serotype-specific antigen 1 (ssa1) (Mannheimia haemolytica (Pasteurella haemolytica)).